Here is a 382-residue protein sequence, read N- to C-terminus: Dual-specificity RNA methyltransferase RlmN (382 aa).

The Proton acceptor role is filled by Glu96. In terms of domain architecture, Radical SAM core spans 102–342 (QGKRGTLCVS…VRTTRGEDID (241 aa)). Cys109 and Cys345 are oxidised to a cystine. Positions 116, 120, and 123 each coordinate [4Fe-4S] cluster. S-adenosyl-L-methionine contacts are provided by residues 170 to 171 (GE), Ser202, 224 to 226 (SLH), and Asn302. Residue Cys345 is the S-methylcysteine intermediate of the active site.

Belongs to the radical SAM superfamily. RlmN family. Requires [4Fe-4S] cluster as cofactor.

It localises to the cytoplasm. It carries out the reaction adenosine(2503) in 23S rRNA + 2 reduced [2Fe-2S]-[ferredoxin] + 2 S-adenosyl-L-methionine = 2-methyladenosine(2503) in 23S rRNA + 5'-deoxyadenosine + L-methionine + 2 oxidized [2Fe-2S]-[ferredoxin] + S-adenosyl-L-homocysteine. The enzyme catalyses adenosine(37) in tRNA + 2 reduced [2Fe-2S]-[ferredoxin] + 2 S-adenosyl-L-methionine = 2-methyladenosine(37) in tRNA + 5'-deoxyadenosine + L-methionine + 2 oxidized [2Fe-2S]-[ferredoxin] + S-adenosyl-L-homocysteine. Functionally, specifically methylates position 2 of adenine 2503 in 23S rRNA and position 2 of adenine 37 in tRNAs. m2A2503 modification seems to play a crucial role in the proofreading step occurring at the peptidyl transferase center and thus would serve to optimize ribosomal fidelity. This is Dual-specificity RNA methyltransferase RlmN from Pseudomonas fluorescens (strain ATCC BAA-477 / NRRL B-23932 / Pf-5).